Consider the following 598-residue polypeptide: Glutamine--fructose-6-phosphate aminotransferase [isomerizing] (598 aa).

Cysteine 2 serves as the catalytic Nucleophile; for GATase activity. The 217-residue stretch at 2-218 (CGIVGYIGNN…DLSLGYASKD (217 aa)) folds into the Glutamine amidotransferase type-2 domain. SIS domains follow at residues 277 to 421 (VFDE…KRNL) and 450 to 588 (LSKR…VDMP). Lysine 593 functions as the For Fru-6P isomerization activity in the catalytic mechanism.

As to quaternary structure, homodimer.

It localises to the cytoplasm. The enzyme catalyses D-fructose 6-phosphate + L-glutamine = D-glucosamine 6-phosphate + L-glutamate. Catalyzes the first step in hexosamine metabolism, converting fructose-6P into glucosamine-6P using glutamine as a nitrogen source. The sequence is that of Glutamine--fructose-6-phosphate aminotransferase [isomerizing] from Campylobacter jejuni subsp. jejuni serotype O:2 (strain ATCC 700819 / NCTC 11168).